The chain runs to 406 residues: 3-isopropylmalate dehydrogenase, chloroplastic (406 aa).

Residues 1–34 (MAAALQTNIRPVKFPATLRALTKQSSPAPFRVRC) constitute a chloroplast transit peptide. Ser-71 carries the post-translational modification Phosphoserine. 117–130 (GYKWDKNEKHLKPE) provides a ligand contact to NAD(+). Positions 137, 147, 175, and 265 each coordinate substrate. The Mg(2+) site is built by Asp-265, Asp-289, and Asp-293. 323–335 (GSAPDIAGQDKAN) provides a ligand contact to NAD(+).

Belongs to the isocitrate and isopropylmalate dehydrogenases family. In terms of assembly, homodimer. Mg(2+) serves as cofactor. Mn(2+) is required as a cofactor.

Its subcellular location is the plastid. It is found in the chloroplast. It carries out the reaction (2R,3S)-3-isopropylmalate + NAD(+) = 4-methyl-2-oxopentanoate + CO2 + NADH. Its pathway is amino-acid biosynthesis; L-leucine biosynthesis; L-leucine from 3-methyl-2-oxobutanoate: step 3/4. Functionally, catalyzes the oxidation of 3-carboxy-2-hydroxy-4-methylpentanoate (3-isopropylmalate) to 3-carboxy-4-methyl-2-oxopentanoate. The product decarboxylates to 4-methyl-2 oxopentanoate. This chain is 3-isopropylmalate dehydrogenase, chloroplastic, found in Brassica napus (Rape).